Here is a 344-residue protein sequence, read N- to C-terminus: 5-formaminoimidazole-4-carboxamide-1-(beta)-D-ribofuranosyl 5'-monophosphate synthetase (344 aa).

The 5-amino-1-(5-phospho-beta-D-ribosyl)imidazole-4-carboxamide site is built by His31 and Ser96. The ATP-grasp domain occupies 130–324 (MELLQRAGVP…YFDRPMDMGE (195 aa)). ATP is bound by residues 153–198 (PVIV…VPAY) and Glu220. Asn240 contacts 5-amino-1-(5-phospho-beta-D-ribosyl)imidazole-4-carboxamide. Positions 279 and 292 each coordinate Mg(2+).

The protein belongs to the phosphohexose mutase family. It depends on Mg(2+) as a cofactor. Mn(2+) is required as a cofactor.

It carries out the reaction 5-amino-1-(5-phospho-beta-D-ribosyl)imidazole-4-carboxamide + formate + ATP = 5-formamido-1-(5-phospho-D-ribosyl)imidazole-4-carboxamide + ADP + phosphate. It participates in purine metabolism; IMP biosynthesis via de novo pathway; 5-formamido-1-(5-phospho-D-ribosyl)imidazole-4-carboxamide from 5-amino-1-(5-phospho-D-ribosyl)imidazole-4-carboxamide (formate route): step 1/1. Its function is as follows. Catalyzes the ATP- and formate-dependent formylation of 5-aminoimidazole-4-carboxamide-1-beta-d-ribofuranosyl 5'-monophosphate (AICAR) to 5-formaminoimidazole-4-carboxamide-1-beta-d-ribofuranosyl 5'-monophosphate (FAICAR) in the absence of folates. This is 5-formaminoimidazole-4-carboxamide-1-(beta)-D-ribofuranosyl 5'-monophosphate synthetase from Pyrobaculum neutrophilum (strain DSM 2338 / JCM 9278 / NBRC 100436 / V24Sta) (Thermoproteus neutrophilus).